We begin with the raw amino-acid sequence, 279 residues long: Dermonecrotic toxin StSicTox-betaIB1i (279 aa).

Histidine 12 is a catalytic residue. Positions 32 and 34 each coordinate Mg(2+). Catalysis depends on histidine 48, which acts as the Nucleophile. Intrachain disulfides connect cysteine 52/cysteine 58 and cysteine 54/cysteine 198. Aspartate 92 is a Mg(2+) binding site.

The protein belongs to the arthropod phospholipase D family. Class II subfamily. Class IIb sub-subfamily. It depends on Mg(2+) as a cofactor. In terms of tissue distribution, expressed by the venom gland.

The protein resides in the secreted. The enzyme catalyses an N-(acyl)-sphingosylphosphocholine = an N-(acyl)-sphingosyl-1,3-cyclic phosphate + choline. It carries out the reaction N-hexanoyl-sphing-4-enine-1-phosphocholine = N-(hexanoyl)-sphing-4-enine-1,3-cyclic phosphate + choline. The catalysed reaction is an N-(acyl)-sphingosylphosphoethanolamine = an N-(acyl)-sphingosyl-1,3-cyclic phosphate + ethanolamine. It catalyses the reaction N-dodecanoyl-heptadecasphing-4-enine-1-phosphoethanolamine = N-dodecanoyl-heptadecasphing-4-enine-1,3-cyclic phosphate + ethanolamine. The enzyme catalyses a 1-acyl-sn-glycero-3-phosphoethanolamine = a 1-acyl-sn-glycero-2,3-cyclic phosphate + ethanolamine. It carries out the reaction 1-tetradecanoyl-sn-glycero-3-phosphoethanolamine = 1-tetradecanoyl-sn-glycero-2,3-cyclic phosphate + ethanolamine. Functionally, dermonecrotic toxins cleave the phosphodiester linkage between the phosphate and headgroup of certain phospholipids (sphingolipid and lysolipid substrates), forming an alcohol (often choline) and a cyclic phosphate. This toxin acts on lysophosphatidylethanolamine (LPE) and ceramide phosphoethanolamine (CPE) with high activity. This toxin acts on sphingomyelin (SM) with very low activity and is not active on lysophosphatidylserine (LPS), lysophosphatidylcholine (LPC) and lysophosphatidylglycerol (LPG). It acts by transphosphatidylation, releasing exclusively cyclic phosphate as second products. It is not surprising that spider toxins have affinity for ethanolamine-containing sphingolipids since they are common in insect prey. Induces dermonecrosis, hemolysis, increased vascular permeability, edema, inflammatory response, and platelet aggregation. The sequence is that of Dermonecrotic toxin StSicTox-betaIB1i from Sicarius terrosus (Cave spider).